We begin with the raw amino-acid sequence, 124 residues long: Small ribosomal subunit protein uS12 (124 aa).

Asp-89 bears the 3-methylthioaspartic acid mark.

The protein belongs to the universal ribosomal protein uS12 family. Part of the 30S ribosomal subunit. Contacts proteins S8 and S17. May interact with IF1 in the 30S initiation complex.

Functionally, with S4 and S5 plays an important role in translational accuracy. Interacts with and stabilizes bases of the 16S rRNA that are involved in tRNA selection in the A site and with the mRNA backbone. Located at the interface of the 30S and 50S subunits, it traverses the body of the 30S subunit contacting proteins on the other side and probably holding the rRNA structure together. The combined cluster of proteins S8, S12 and S17 appears to hold together the shoulder and platform of the 30S subunit. The protein is Small ribosomal subunit protein uS12 of Tolumonas auensis (strain DSM 9187 / NBRC 110442 / TA 4).